A 999-amino-acid polypeptide reads, in one-letter code: MKCLKTLLVSTTLLGAFSLNAEVTLEQQIKITDEGLHFDGRNLDFSNVGSPDTGEKYDYFFGPNISAHGDAVKTYKHYVFMTWYKGGKNERNVMLSRYNTLSGELSTIEFPHRHTGFRGDPLVGESHNTIGLAVSPINGTIHMVFDMHAYDDNNHGGKFKDDFFRYSYSVPGAAELPHSEFTLDKFVKDTSEVSQGDDDYKHLTMTGDLGDKGNFARLTYPKFFTTVDGTLLLYMRLGGNNNGAYVFNRYDAEAEKWSTFTPFNENNQKSKGNPYNWGLYGNMKYINGKLRVGFQQRSSDNTDKYKYQNGVFYAYSDHPDGFGDWKNHKGEPMTWPLINSDEIKVFEPGDYISHTEANSVYIVGSFDWTVTEKGDIHIISKVRSTDRNRPDYEEVYIHSYKPAGADEFIISTDFTGASEIYTSGDNVYIVGLEGGRPYVEKAQGGTNNFVRVYKATDGPVFDHGTLYIKDGKVYYYLMERTSGNAMPLYLQIIDLDLESDANAPLVSFPSPSLTVEQGFEKLSLNISAESPVEGRFIQSVSLYINDELVRTDDSMPYLFGHGSKPHETGAMGWLDTHEPNPSPLPAGTHIFKAVAVDSEGDSAIATMVLNVNSNAPIVSFPQESLEVDEGFEKLSLNISAESAVEGRSIESVSLYINGELVRTDTSLPYLFGHASKPHETGAMGWLDTHSTNPSPLTAGTYEFTAVAIDSEGEESTASMQLVVKGEPQPPAVTWPNSTVTVYEGYEKLAITIDAESPVEGRDIQSVTLYRNGELVRVDTRPVWNFGHSFAPYEFGAMGWLDRHEPNPSPLGVGTHTFTAVAKDSTGLEGESDMTLIVLSLPGPSITINESDVSLLTEYQNLAITADASTANDDITIVSLALYLNEQLVREIYEPPFEWGGENYSDELLDLPVGTHLAKVVATDSNNNQTEASMFVTIELLGDLNKDSVVDNKDIRLFTAALRNGEEMNIRYDFNDDGVVNNRDTRGLVHRCTYSRCGSN.

An N-terminal signal peptide occupies residues 1-21; that stretch reads MKCLKTLLVSTTLLGAFSLNA. 126–127 contributes to the substrate binding site; the sequence is SH. His-127 functions as the Proton donor/acceptor in the catalytic mechanism. Ca(2+) is bound by residues Asp-189, Asp-199, and Lys-201. Residues Tyr-280 and Arg-297 each coordinate substrate. Positions 300, 303, and 305 each coordinate Ca(2+). Substrate is bound at residue Tyr-361.

It belongs to the polysaccharide lyase 24 family.

In terms of biological role, ulvan lyase involved in ulvan degradation. Ulvan is the main polysaccharide component of the Ulvales (green seaweed) cell wall. It is composed of disaccharide building blocks comprising 3-sulfated rhamnose (Rha3S) linked to D-glucuronic acid (GlcA), L-iduronic acid (IduA), or D-xylose (Xyl). Ulvan lyase catalyzes preferentially the endolytic cleavage of the glycosidic bond between Rha3S and the uronic acid GlcA, but not IduA, producing oligosaccharides that have unsaturated 4-deoxy-L-threo-hex-4-enopyranosiduronic acid (deltaUA) at the non-reducing end. The most abundant end products in the degradation of the ulvan polysaccharide were deltaUA-Rha3S disaccharides and deltaUA-Rha3S-IduA-Rha3S and deltaUA-Rha3S-Xyl-Rha3S tetrasaccharides. The chain is Ulvan lyase, long isoform from Alteromonas sp.